The sequence spans 57 residues: Protein new-glue 4 (57 aa).

The first 16 residues, 1-16 (MEWKLLLIVLPWLLVC), serve as a signal peptide directing secretion.

The protein localises to the secreted. The sequence is that of Protein new-glue 4 (ng4) from Drosophila melanogaster (Fruit fly).